The chain runs to 227 residues: Ubiquitin domain-containing protein 1 (227 aa).

Residues 1–36 (MGNCVGRQRRERPTAPGHPRKRAGRNEPLKKERLKW) are disordered. Residues 24 to 36 (GRNEPLKKERLKW) are compositionally biased toward basic and acidic residues. Positions 149 to 224 (FPLKVRLSTG…IQVIINQPPP (76 aa)) constitute a Ubiquitin-like domain.

As to quaternary structure, interacts with UBTD1.

May be involved in the regulation of cellular senescence through a positive feedback loop with TP53. Is a TP53 downstream target gene that increases the stability of TP53 protein by promoting the ubiquitination and degradation of MDM2. The chain is Ubiquitin domain-containing protein 1 (UBTD1) from Bos taurus (Bovine).